The sequence spans 286 residues: Sulfur carrier protein FdhD (286 aa).

Cysteine 110 serves as the catalytic Cysteine persulfide intermediate. 247 to 252 (FARGEK) contacts Mo-bis(molybdopterin guanine dinucleotide).

Belongs to the FdhD family.

It is found in the cytoplasm. Functionally, required for formate dehydrogenase (FDH) activity. Acts as a sulfur carrier protein that transfers sulfur from IscS to the molybdenum cofactor prior to its insertion into FDH. This Wolinella succinogenes (strain ATCC 29543 / DSM 1740 / CCUG 13145 / JCM 31913 / LMG 7466 / NCTC 11488 / FDC 602W) (Vibrio succinogenes) protein is Sulfur carrier protein FdhD.